The sequence spans 250 residues: 3-deoxy-manno-octulosonate cytidylyltransferase (250 aa).

It belongs to the KdsB family.

The protein localises to the cytoplasm. The catalysed reaction is 3-deoxy-alpha-D-manno-oct-2-ulosonate + CTP = CMP-3-deoxy-beta-D-manno-octulosonate + diphosphate. Its pathway is nucleotide-sugar biosynthesis; CMP-3-deoxy-D-manno-octulosonate biosynthesis; CMP-3-deoxy-D-manno-octulosonate from 3-deoxy-D-manno-octulosonate and CTP: step 1/1. The protein operates within bacterial outer membrane biogenesis; lipopolysaccharide biosynthesis. In terms of biological role, activates KDO (a required 8-carbon sugar) for incorporation into bacterial lipopolysaccharide in Gram-negative bacteria. This chain is 3-deoxy-manno-octulosonate cytidylyltransferase, found in Francisella tularensis subsp. tularensis (strain FSC 198).